The primary structure comprises 346 residues: Holliday junction branch migration complex subunit RuvB (346 aa).

The tract at residues 1-188 (MSDEYGPPER…FGIVQRLAYY (188 aa)) is large ATPase domain (RuvB-L). ATP contacts are provided by residues Leu27, Arg28, Gly69, Lys72, Thr73, Thr74, 135 to 137 (EDF), Arg178, Tyr188, and Arg225. Residue Thr73 participates in Mg(2+) binding. The segment at 189-259 (PVDELTRIVQ…VAADAMELLD (71 aa)) is small ATPAse domain (RuvB-S). Residues 262 to 346 (RNGLDEQDRR…QAAGSGDLFG (85 aa)) form a head domain (RuvB-H) region. Residues Arg298, Arg317, and Arg322 each coordinate DNA.

The protein belongs to the RuvB family. Homohexamer. Forms an RuvA(8)-RuvB(12)-Holliday junction (HJ) complex. HJ DNA is sandwiched between 2 RuvA tetramers; dsDNA enters through RuvA and exits via RuvB. An RuvB hexamer assembles on each DNA strand where it exits the tetramer. Each RuvB hexamer is contacted by two RuvA subunits (via domain III) on 2 adjacent RuvB subunits; this complex drives branch migration. In the full resolvosome a probable DNA-RuvA(4)-RuvB(12)-RuvC(2) complex forms which resolves the HJ.

Its subcellular location is the cytoplasm. The catalysed reaction is ATP + H2O = ADP + phosphate + H(+). The RuvA-RuvB-RuvC complex processes Holliday junction (HJ) DNA during genetic recombination and DNA repair, while the RuvA-RuvB complex plays an important role in the rescue of blocked DNA replication forks via replication fork reversal (RFR). RuvA specifically binds to HJ cruciform DNA, conferring on it an open structure. The RuvB hexamer acts as an ATP-dependent pump, pulling dsDNA into and through the RuvAB complex. RuvB forms 2 homohexamers on either side of HJ DNA bound by 1 or 2 RuvA tetramers; 4 subunits per hexamer contact DNA at a time. Coordinated motions by a converter formed by DNA-disengaged RuvB subunits stimulates ATP hydrolysis and nucleotide exchange. Immobilization of the converter enables RuvB to convert the ATP-contained energy into a lever motion, pulling 2 nucleotides of DNA out of the RuvA tetramer per ATP hydrolyzed, thus driving DNA branch migration. The RuvB motors rotate together with the DNA substrate, which together with the progressing nucleotide cycle form the mechanistic basis for DNA recombination by continuous HJ branch migration. Branch migration allows RuvC to scan DNA until it finds its consensus sequence, where it cleaves and resolves cruciform DNA. This is Holliday junction branch migration complex subunit RuvB from Halorhodospira halophila (strain DSM 244 / SL1) (Ectothiorhodospira halophila (strain DSM 244 / SL1)).